Here is a 253-residue protein sequence, read N- to C-terminus: tRNA uridine(34) hydroxylase (253 aa).

The 95-residue stretch at histidine 127–tyrosine 221 folds into the Rhodanese domain. Cysteine 181 acts as the Cysteine persulfide intermediate in catalysis.

Belongs to the TrhO family.

It carries out the reaction uridine(34) in tRNA + AH2 + O2 = 5-hydroxyuridine(34) in tRNA + A + H2O. In terms of biological role, catalyzes oxygen-dependent 5-hydroxyuridine (ho5U) modification at position 34 in tRNAs. The polypeptide is tRNA uridine(34) hydroxylase (Xanthomonas campestris pv. campestris (strain 8004)).